The following is a 338-amino-acid chain: MTTVQEAVPNLIPTQDVTPRPAPKKVEAGVKLRGAEKVARIPVKIIPTEELPKKPDWIRVRIPVSPEVDRIKQLLRKHKLHSVCEEASCPNLGECFSGGTATFMIMGDICTRRCPFCDVGHGRPKPLDLDEPKNLAIAIADLRLKYVVITSVDRDDLRDGGAQHFADCIREIRALSPGVQLETLVPDYRGRMDVALEITAQTPPDVFNHNLETVPRLYKAARPGSDYDWSLDLLQKFKQMVPHVPTKSGLMLGLGETDEEVIEVMHRMREHDIDMLTLGQYLQPSRNHLPVQRFVHPDTFAWFAEEGYKMGFKNVASGPLVRSSYHADQQAHEAKIKL.

The tract at residues 1 to 22 (MTTVQEAVPNLIPTQDVTPRPA) is disordered. The [4Fe-4S] cluster site is built by Cys-84, Cys-89, Cys-95, Cys-110, Cys-114, Cys-117, and Ser-324. The 218-residue stretch at 96-313 (FSGGTATFMI…AEEGYKMGFK (218 aa)) folds into the Radical SAM core domain.

It belongs to the radical SAM superfamily. Lipoyl synthase family. The cofactor is [4Fe-4S] cluster.

The protein resides in the cytoplasm. The catalysed reaction is [[Fe-S] cluster scaffold protein carrying a second [4Fe-4S](2+) cluster] + N(6)-octanoyl-L-lysyl-[protein] + 2 oxidized [2Fe-2S]-[ferredoxin] + 2 S-adenosyl-L-methionine + 4 H(+) = [[Fe-S] cluster scaffold protein] + N(6)-[(R)-dihydrolipoyl]-L-lysyl-[protein] + 4 Fe(3+) + 2 hydrogen sulfide + 2 5'-deoxyadenosine + 2 L-methionine + 2 reduced [2Fe-2S]-[ferredoxin]. The protein operates within protein modification; protein lipoylation via endogenous pathway; protein N(6)-(lipoyl)lysine from octanoyl-[acyl-carrier-protein]: step 2/2. In terms of biological role, catalyzes the radical-mediated insertion of two sulfur atoms into the C-6 and C-8 positions of the octanoyl moiety bound to the lipoyl domains of lipoate-dependent enzymes, thereby converting the octanoylated domains into lipoylated derivatives. This chain is Lipoyl synthase, found in Pseudomonas entomophila (strain L48).